The following is a 647-amino-acid chain: Leucine-rich repeat transmembrane protein FLRT3 (647 aa).

The signal sequence occupies residues 1–28 (MITVPWSVFLIWTKIGLLLDMAPYSVAA). Over 29–526 (KPCPSVCRCD…KEPYKNSSVP (498 aa)) the chain is Extracellular. The LRRNT domain maps to 30-62 (PCPSVCRCDVGFIYCNDRDLTSIPTGIPEDATN). Cystine bridges form between cysteine 31-cysteine 37 and cysteine 35-cysteine 44. LRR repeat units follow at residues 58–82 (EDAT…LKNL), 83–105 (RRVE…LPKY), 107–126 (KELH…SLSQ), 127–152 (IPYL…AFRD), 154–179 (IYLR…TIEE), 181–197 (RLDD…SLQD), 198–223 (LTNL…VFMN), 225–246 (VNLT…NLPG), 247–269 (TNLR…AFSY), and 270–293 (LRQL…VFDD). N-linked (GlcNAc...) asparagine glycosylation occurs at asparagine 226. Positions 305-356 (NPWHCGCKMKWVRDWLQSLPLKVNVRGLMCQAPEKVRGMAIKDLNAELFDCK) constitute an LRRCT domain. Residues cysteine 309 and cysteine 334 are joined by a disulfide bond. In terms of domain architecture, Fibronectin type-III spans 404–502 (PVRKIITIFV…ECIETETAPL (99 aa)). Residues 527-547 (LAAIIGGAVALVALALLALVC) traverse the membrane as a helical segment. The Cytoplasmic portion of the chain corresponds to 548 to 647 (WYVHRNGALF…GIPDSDHSHS (100 aa)). The segment at 620–647 (LYKNSHSESSSNRSYRDSGIPDSDHSHS) is disordered.

Post-translationally, N-glycosylated. In terms of processing, proteolytic cleavage in the juxtamembrane region gives rise to a soluble ectodomain. Cleavage is probably effected by a metalloprotease.

It localises to the cell membrane. It is found in the endoplasmic reticulum membrane. The protein resides in the cell junction. The protein localises to the focal adhesion. Its subcellular location is the secreted. It localises to the cell projection. It is found in the axon. The protein resides in the growth cone membrane. Modulates the structure and function of the apical ectodermal ridge (AER) that controls embryonic limb development. Functions in cell-cell adhesion, cell migration and axon guidance, exerting an attractive or repulsive role depending on its interaction partners. Plays a role in the spatial organization of brain neurons. Plays a role in vascular development. Plays a role in cell-cell adhesion via its interaction with latrophilins that are expressed at the surface of adjacent cells. Mediates axon attraction towards cells expressing NTN1. Mediates axon growth cone collapse and plays a repulsive role in neuron guidance via its interaction with UNC-5 family members. Plays a role in the regulation of the density of glutamaergic synapses. Plays a role in fibroblast growth factor-mediated signaling cascades. Required for normal morphogenesis during embryonic development, but not for normal embryonic patterning. The sequence is that of Leucine-rich repeat transmembrane protein FLRT3 (FLRT3) from Gallus gallus (Chicken).